Reading from the N-terminus, the 293-residue chain is Bifunctional protein FolD (293 aa).

Residues Gly-165 to Ser-167, Ser-190, and Ile-231 each bind NADP(+).

It belongs to the tetrahydrofolate dehydrogenase/cyclohydrolase family. Homodimer.

The catalysed reaction is (6R)-5,10-methylene-5,6,7,8-tetrahydrofolate + NADP(+) = (6R)-5,10-methenyltetrahydrofolate + NADPH. It carries out the reaction (6R)-5,10-methenyltetrahydrofolate + H2O = (6R)-10-formyltetrahydrofolate + H(+). Its pathway is one-carbon metabolism; tetrahydrofolate interconversion. Functionally, catalyzes the oxidation of 5,10-methylenetetrahydrofolate to 5,10-methenyltetrahydrofolate and then the hydrolysis of 5,10-methenyltetrahydrofolate to 10-formyltetrahydrofolate. This is Bifunctional protein FolD from Synechococcus sp. (strain CC9902).